The following is a 607-amino-acid chain: Elongation factor 4 (607 aa).

The tr-type G domain maps to 11-193; that stretch reads EKIRNFSIIA…QIVEKVPAPQ (183 aa). GTP contacts are provided by residues 23 to 28 and 140 to 143; these read DHGKST and NKID.

This sequence belongs to the TRAFAC class translation factor GTPase superfamily. Classic translation factor GTPase family. LepA subfamily.

The protein localises to the cell membrane. The catalysed reaction is GTP + H2O = GDP + phosphate + H(+). Its function is as follows. Required for accurate and efficient protein synthesis under certain stress conditions. May act as a fidelity factor of the translation reaction, by catalyzing a one-codon backward translocation of tRNAs on improperly translocated ribosomes. Back-translocation proceeds from a post-translocation (POST) complex to a pre-translocation (PRE) complex, thus giving elongation factor G a second chance to translocate the tRNAs correctly. Binds to ribosomes in a GTP-dependent manner. This chain is Elongation factor 4, found in Lactococcus lactis subsp. cremoris (strain SK11).